A 307-amino-acid chain; its full sequence is Methionyl-tRNA formyltransferase (307 aa).

108–111 (SLLP) is a (6S)-5,6,7,8-tetrahydrofolate binding site.

This sequence belongs to the Fmt family.

The catalysed reaction is L-methionyl-tRNA(fMet) + (6R)-10-formyltetrahydrofolate = N-formyl-L-methionyl-tRNA(fMet) + (6S)-5,6,7,8-tetrahydrofolate + H(+). Its function is as follows. Attaches a formyl group to the free amino group of methionyl-tRNA(fMet). The formyl group appears to play a dual role in the initiator identity of N-formylmethionyl-tRNA by promoting its recognition by IF2 and preventing the misappropriation of this tRNA by the elongation apparatus. This Renibacterium salmoninarum (strain ATCC 33209 / DSM 20767 / JCM 11484 / NBRC 15589 / NCIMB 2235) protein is Methionyl-tRNA formyltransferase.